Reading from the N-terminus, the 97-residue chain is Putative pterin-4-alpha-carbinolamine dehydratase (97 aa).

The protein belongs to the pterin-4-alpha-carbinolamine dehydratase family.

The catalysed reaction is (4aS,6R)-4a-hydroxy-L-erythro-5,6,7,8-tetrahydrobiopterin = (6R)-L-erythro-6,7-dihydrobiopterin + H2O. This is Putative pterin-4-alpha-carbinolamine dehydratase from Ruegeria pomeroyi (strain ATCC 700808 / DSM 15171 / DSS-3) (Silicibacter pomeroyi).